We begin with the raw amino-acid sequence, 105 residues long: Large ribosomal subunit protein bL21 (105 aa).

The protein belongs to the bacterial ribosomal protein bL21 family. As to quaternary structure, part of the 50S ribosomal subunit. Contacts protein L20.

This protein binds to 23S rRNA in the presence of protein L20. This chain is Large ribosomal subunit protein bL21, found in Stenotrophomonas maltophilia (strain R551-3).